The primary structure comprises 616 residues: Chaperone protein DnaK (616 aa).

The residue at position 175 (threonine 175) is a Phosphothreonine; by autocatalysis. The interval 579-616 (GGDPSQAGGFDPNAAGGAQQEPHDDNVVDADFKVDDDK) is disordered. Over residues 599–616 (EPHDDNVVDADFKVDDDK) the composition is skewed to basic and acidic residues.

It belongs to the heat shock protein 70 family.

In terms of biological role, acts as a chaperone. In Clostridium botulinum (strain Eklund 17B / Type B), this protein is Chaperone protein DnaK.